Consider the following 867-residue polypeptide: MALVFSALLLLGLCGKISSEGQPAFHNTPGAMNYELPTTKYETQDTFNAGIVGPLYKMVHIFLSVVQPNDFPLDLIKKLIQNKKFDISVDSKEPEIIVLALKIALYEIGVLICAILGLLFIILMPLVGCFFCMCRCCNKCGGEMHQRQKQNAPCRRKCLGLSLLVICLLMSLGIIYGFVANQQTRTRIKGTQKLAKSNFRDFQTLLTETPKQIDYVVEQYTNTKNKAFSDLDGIGSVLGGRIKDQLKPKVTPVLEEIKAMATAIKQTKDALQNMSSSLKSLQDAATQLNTNLSSVRNSIENSLSSSDCTSDPASKICDSIRPSLSSLGSSLNSSQLPSVDRELNTVTEVDKTDLESLVKRGYTTIDEIPNTIQNQTVDVIKDVKNTLDSISSNIKDMSQSIPIEDMLLQVSHYLNNSNRYLNQELPKLEEYDSYWWLGGLIVCFLLTLIVTFFFLGLLCGVFGYDKHATPTRRGCVSNTGGIFLMAGVGFGFLFCWILMILVVLTFVVGANVEKLLCEPYENKKLLQVLDTPYLLKEQWQFYLSGMLFNNPDINMTFEQVYRDCKRGRGIYAAFQLENVVNVSDHFNIDQISENINTELENLNVNIDSIELLDNTGRKSLEDFAHSGIDTIDYSTYLKETEKSPTEVNLLTFASTLEAKANQLPEGKPKQAFLLDVQNIRAIHQHLLPPVQQSLNTLRQSVWTLQQTSNKLPEKVKKILASLDSVQHFLTNNVSLIVIGETKKFGKTILGYFEHYLHWVFYAITEKMTSCKPMATAMDSAVNGILCGYVADPLNLFWFGIGKATVLLLPAVIIAIKLAKYYRRMDSEDVYDDVETVPMKNLEIGSNGYHKDHLYGVHNPVMTSPSRY.

The signal sequence occupies residues 1–19 (MALVFSALLLLGLCGKISS). Residues 20–107 (EGQPAFHNTP…VLALKIALYE (88 aa)) are Extracellular-facing. Residues 108-128 (IGVLICAILGLLFIILMPLVG) traverse the membrane as a helical segment. The Cytoplasmic portion of the chain corresponds to 129–158 (CFFCMCRCCNKCGGEMHQRQKQNAPCRRKC). The chain crosses the membrane as a helical span at residues 159–179 (LGLSLLVICLLMSLGIIYGFV). Topologically, residues 180–434 (ANQQTRTRIK…LPKLEEYDSY (255 aa)) are extracellular. N6-acetyllysine is present on residues Lys226, Lys258, and Lys265. N-linked (GlcNAc...) asparagine glycans are attached at residues Asn273, Asn291, Asn332, Asn374, and Asn415. A helical transmembrane segment spans residues 435–455 (WWLGGLIVCFLLTLIVTFFFL). Over 456–487 (GLLCGVFGYDKHATPTRRGCVSNTGGIFLMAG) the chain is Cytoplasmic. The helical transmembrane segment at 488-508 (VGFGFLFCWILMILVVLTFVV) threads the bilayer. The Extracellular segment spans residues 509 to 794 (GANVEKLLCE…LCGYVADPLN (286 aa)). Residues Asn554, Asn581, and Asn732 are each glycosylated (N-linked (GlcNAc...) asparagine). Residues 795 to 815 (LFWFGIGKATVLLLPAVIIAI) traverse the membrane as a helical segment. The Cytoplasmic portion of the chain corresponds to 816-867 (KLAKYYRRMDSEDVYDDVETVPMKNLEIGSNGYHKDHLYGVHNPVMTSPSRY). Ser865 carries the phosphoserine modification.

This sequence belongs to the prominin family. In terms of assembly, interacts with CDHR1 and with actin filaments. Interacts with NAT8 and NAT8B. In terms of processing, acetylation at Lys-226, Lys-258 and Lys-265 by NAT8 and NAT8B may control PROM1 protein expression and its function in cell apoptosis. In the submandibular gland, expressed on the apical side of epithelial cells. In the parotid gland, expressed in the intercalated ducts. In the sublingual gland, expressed in intercalated ducts. In the extraorbital lacrimal gland, expressed in the intercalated tubules and larger intralobular ducts. Expressed in the retina. Present in urine within small membrane particles (at protein level). In the embryo, expressed on the apical side of neuroepithelial cells and of other epithelia such as lung buds, gut and ureter buds. In the adult, expressed at the apical side of the kidney tubules and of the ependymal layer of the brain. Not expressed in gut, liver, lung, pituitary, adrenal, heart or spleen. Localized to the nascent disk membranes at the base of the rod outer segment in the retina (at protein level).

It localises to the apical cell membrane. It is found in the cell projection. Its subcellular location is the microvillus membrane. The protein localises to the cilium. The protein resides in the photoreceptor outer segment. It localises to the endoplasmic reticulum. It is found in the endoplasmic reticulum-Golgi intermediate compartment. In terms of biological role, may play a role in cell differentiation, proliferation and apoptosis. Binds cholesterol in cholesterol-containing plasma membrane microdomains and may play a role in the organization of the apical plasma membrane in epithelial cells. During early retinal development acts as a key regulator of disk morphogenesis. Involved in regulation of MAPK and Akt signaling pathways. In neuroblastoma cells suppresses cell differentiation such as neurite outgrowth in a RET-dependent manner. The sequence is that of Prominin-1 (Prom1) from Mus musculus (Mouse).